A 431-amino-acid chain; its full sequence is Forkhead box protein P3 (431 aa).

A disordered region spans residues 1-68 (MPNPRPGKPS…SSLNPMPPSQ (68 aa)). Low complexity predominate over residues 10-25 (SAPSLALGPSPGASPS). Position 19 is a phosphoserine; by CDK2 (Ser-19). An N6-acetyllysine modification is found at Lys-31. Positions 68–76 (QLQLPTLPL) match the Nuclear export signal motif. The LXXLL motif signature appears at 92 to 96 (LQALL). The essential for transcriptional repressor activity and for interaction with KAT5 and HDAC7 stretch occupies residues 106-190 (LSTVDAHART…STLSAVPQSS (85 aa)). The interval 106-198 (LSTVDAHART…SSYPLLANGV (93 aa)) is interaction with ZFP90. Positions 149–199 (LPPGINVASLEWVSREPALLCTFPNPSAPRKDSTLSAVPQSSYPLLANGVC) are interaction with IKZF4. The segment at 197-222 (GVCKWPGCEKVFEEPEDFLKHCQADH) adopts a C2H2-type zinc-finger fold. Residues 239–248 (VQSLEQQLVL) carry the Nuclear export signal motif. Residues 239–260 (VQSLEQQLVLEKEKLSAMQAHL) form a leucine-zipper region. Residues Lys-250 and Lys-252 each participate in a glycyl lysine isopeptide (Lys-Gly) (interchain with G-Cter in ubiquitin) cross-link. 2 positions are modified to N6-acetyllysine; alternate: Lys-263 and Lys-268. Glycyl lysine isopeptide (Lys-Gly) (interchain with G-Cter in ubiquitin); alternate cross-links involve residues Lys-263 and Lys-268. Residues 278–336 (GSCCIVAAGSQGPVVPAWSGPREAPDSLFAVRRHLWGSHGNSTFPEFLHNMDYFKFHNM) form an interaction with RUNX1 region. The segment at residues 337–423 (RPPFTYATLI…RKKRSQRPSR (87 aa)) is a DNA-binding region (fork-head). Residue Lys-393 forms a Glycyl lysine isopeptide (Lys-Gly) (interchain with G-Cter in ubiquitin) linkage. A Nuclear localization signal motif is present at residues 414-417 (RKKR). Residue Ser-418 is modified to Phosphoserine. Positions 418-431 (SQRPSRCSNPTPGP) are excised as a propeptide.

Homodimer. Dimerization is essential for its transcriptional regulator activity. Interacts with IKZF3. Isoform 1 (via LXXLL motif), but not isoform 2, interacts with isoform 4 of RORA (via AF-2 motif). Interacts with STUB1, HSPA8 and HSPA1A/B. Interacts with PPP1CA, PPP1CB and PPP1CG. Interacts with KAT5 and HDAC7. Interacts with HDAC9 in the absence of T-cell stimulation. Interacts with USP7. Interacts with isoform 2 of ZFP90 and can form a complex with TRIM28 in the presence of isoform 2 of ZFP90. Interacts with RUNX1. Interacts with RORC. Interacts with RELA and NFATC2. Interacts with RUNX2, RUNX3 and IKZF4. Post-translationally, polyubiquitinated, leading to its proteasomal degradation in regulatory T-cells (Treg) which is mediated by STUB1 in a HSPA1A/B-dependent manner. Deubiquitinated by USP7 and USP44; leading to increase in protein stability. Phosphorylation at Ser-418 regulates its transcriptional repressor activity and consequently, regulatory T-cells (Treg) suppressive function. Dephosphorylated at Ser-418 by protein phosphatase 1 (PP1) in Treg cells derived from patients with rheumatoid arthritis. Phosphorylation by CDK2 negatively regulates its transcriptional activity and protein stability. In terms of processing, acetylation on lysine residues stabilizes FOXP3 and promotes differentiation of T-cells into induced regulatory T-cells (iTregs) associated with suppressive functions. Acetylation is mediated by a coordinated action of KAT5 and EP300/p300 acetyltransferases: EP300/p300 is required to enhance KAT5 autoacetylation, promoting acetylation of FOXP3 by KAT5. Deacetylated by SIRT1. Post-translationally, undergoes proteolytic cleavage in activated regulatory T-cells (Treg), and can be cleaved at either the N- or C-terminal site, or at both sites.

It localises to the nucleus. The protein resides in the cytoplasm. Functionally, transcriptional regulator which is crucial for the development and inhibitory function of regulatory T-cells (Treg). Plays an essential role in maintaining homeostasis of the immune system by allowing the acquisition of full suppressive function and stability of the Treg lineage, and by directly modulating the expansion and function of conventional T-cells. Can act either as a transcriptional repressor or a transcriptional activator depending on its interactions with other transcription factors, histone acetylases and deacetylases. The suppressive activity of Treg involves the coordinate activation of many genes, including CTLA4 and TNFRSF18 by FOXP3 along with repression of genes encoding cytokines such as interleukin-2 (IL2) and interferon-gamma (IFNG). Inhibits cytokine production and T-cell effector function by repressing the activity of two key transcription factors, RELA and NFATC2. Mediates transcriptional repression of IL2 via its association with histone acetylase KAT5 and histone deacetylase HDAC7. Can activate the expression of TNFRSF18, IL2RA and CTLA4 and repress the expression of IL2 and IFNG via its association with transcription factor RUNX1. Inhibits the differentiation of IL17 producing helper T-cells (Th17) by antagonizing RORC function, leading to down-regulation of IL17 expression, favoring Treg development. Inhibits the transcriptional activator activity of RORA. Can repress the expression of IL2 and IFNG via its association with transcription factor IKZF4. This Homo sapiens (Human) protein is Forkhead box protein P3 (FOXP3).